Here is a 267-residue protein sequence, read N- to C-terminus: NAD kinase 2 (267 aa).

The active-site Proton acceptor is the Asp52. Residues 52–53 (DA), 124–125 (NE), Arg151, Asp153, 164–169 (TAYNKS), and Ala188 each bind NAD(+).

This sequence belongs to the NAD kinase family. It depends on a divalent metal cation as a cofactor.

Its subcellular location is the cytoplasm. It carries out the reaction NAD(+) + ATP = ADP + NADP(+) + H(+). In terms of biological role, involved in the regulation of the intracellular balance of NAD and NADP, and is a key enzyme in the biosynthesis of NADP. Catalyzes specifically the phosphorylation on 2'-hydroxyl of the adenosine moiety of NAD to yield NADP. The polypeptide is NAD kinase 2 (Bacillus anthracis).